We begin with the raw amino-acid sequence, 319 residues long: Methionyl-tRNA formyltransferase (319 aa).

Residue 116 to 119 (SLLP) participates in (6S)-5,6,7,8-tetrahydrofolate binding.

This sequence belongs to the Fmt family.

The enzyme catalyses L-methionyl-tRNA(fMet) + (6R)-10-formyltetrahydrofolate = N-formyl-L-methionyl-tRNA(fMet) + (6S)-5,6,7,8-tetrahydrofolate + H(+). Attaches a formyl group to the free amino group of methionyl-tRNA(fMet). The formyl group appears to play a dual role in the initiator identity of N-formylmethionyl-tRNA by promoting its recognition by IF2 and preventing the misappropriation of this tRNA by the elongation apparatus. In Wigglesworthia glossinidia brevipalpis, this protein is Methionyl-tRNA formyltransferase.